Here is a 196-residue protein sequence, read N- to C-terminus: Small ribosomal subunit protein uS4c (196 aa).

The span at 1 to 14 shows a compositional bias: basic residues; it reads MSRYRGPRLKKIRR. Residues 1-43 are disordered; sequence MSRYRGPRLKKIRRLGALPGLTRKTPKSGSNPKKKFHSGKKEQ. The S4 RNA-binding domain maps to 89–169; sequence MRLDNILFRL…LPKHLTIDTL (81 aa).

Belongs to the universal ribosomal protein uS4 family. Part of the 30S ribosomal subunit. Contacts protein S5. The interaction surface between S4 and S5 is involved in control of translational fidelity.

The protein resides in the plastid. It localises to the chloroplast. In terms of biological role, one of the primary rRNA binding proteins, it binds directly to 16S rRNA where it nucleates assembly of the body of the 30S subunit. With S5 and S12 plays an important role in translational accuracy. This is Small ribosomal subunit protein uS4c (rps4) from Melica uniflora (Wood melick grass).